Reading from the N-terminus, the 780-residue chain is Gelsolin (780 aa).

The signal sequence occupies residues 1-25; it reads MAPYCSSLRSALLVLALCALSPSHA. Positions 28-48 are disordered; that stretch reads ASRGRAQERAPQSRVSETRPS. Positions 51–174 are actin-severing; it reads VVEHPEFLKA…YKKGGVASGF (124 aa). One copy of the Gelsolin-like 1 repeat lies at 74–155; sequence FDLVPVPPNL…EVQGFESSTF (82 aa). Tyrosine 84 bears the Phosphotyrosine mark. Positions 90, 91, 122, 134, 139, and 141 each coordinate Ca(2+). Residues 121–124 are actin-actin interfilament contact point; that stretch reads DESG. 160–167 is a binding site for a 1,2-diacyl-sn-glycero-3-phospho-(1D-myo-inositol-4,5-bisphosphate); it reads KSGLKYKK. Valine 170 contacts Ca(2+). Position 186-194 (186-194) interacts with a 1,2-diacyl-sn-glycero-3-phospho-(1D-myo-inositol-4,5-bisphosphate); it reads RLFQVKGRR. A Gelsolin-like 2 repeat occupies 196 to 268; the sequence is VRATEVPVSW…SEEGSEPEAM (73 aa). Residues glycine 211 and aspartate 212 each contribute to the Ca(2+) site. Cysteine 213 and cysteine 226 are disulfide-bonded. The Ca(2+) site is built by glutamate 234, aspartate 284, glutamate 327, aspartate 328, and glutamate 352. Residues 244-286 are disordered; that stretch reads GIRDNERSGRAQVHVSEEGSEPEAMLQVLGPKPDLPQGTEDTA. The Gelsolin-like 3 repeat unit spans residues 315-387; that stretch reads DENPFAQSAL…LPEGGETPLF (73 aa). Phosphotyrosine is present on residues tyrosine 407 and tyrosine 463. The interval 432–780 is actin-binding, Ca-sensitive; the sequence is AAQHGMDDDG…LDRALAELAA (349 aa). The Gelsolin-like 4 repeat unit spans residues 453–534; it reads SNKVLVDPAT…VQGKEPAHLM (82 aa). Residues glycine 469, aspartate 470, glutamate 500, aspartate 512, glycine 517, proline 519, and threonine 549 each contribute to the Ca(2+) site. A Gelsolin-like 5 repeat occupies 576-640; the sequence is AVEVMPKAGA…EEGSEPDGFW (65 aa). Lysine 582 bears the N6-acetyllysine mark. Residues asparagine 589 and aspartate 590 each coordinate Ca(2+). Tyrosine 601 is subject to Phosphotyrosine. Residue glutamate 612 participates in Ca(2+) binding. Tyrosine 649 carries the post-translational modification Phosphotyrosine. The Gelsolin-like 6 repeat unit spans residues 679–754; the sequence is IEEVPGELMQ…VRQGFEPPSF (76 aa). Positions 694, 695, and 717 each coordinate Ca(2+). Residue threonine 740 is modified to Phosphothreonine.

This sequence belongs to the villin/gelsolin family. Binds to actin and to fibronectin. Identified in a complex composed of ACTA1, COBL, GSN and TMSB4X. Interacts with the inactive form of EIF2AK2/PKR. Interacts with FLII. In terms of processing, phosphorylated on tyrosine residues in vitro.

It localises to the secreted. The protein resides in the cytoplasm. It is found in the cytoskeleton. In terms of biological role, calcium-regulated, actin-modulating protein that binds to the plus (or barbed) ends of actin monomers or filaments, preventing monomer exchange (end-blocking or capping). It can promote the assembly of monomers into filaments (nucleation) as well as sever filaments already formed. Plays a role in ciliogenesis. The protein is Gelsolin (Gsn) of Rattus norvegicus (Rat).